The primary structure comprises 523 residues: 2-oxopropyl-CoM reductase, carboxylating (523 aa).

An FAD-binding site is contributed by 53–54 (AA). A 2-oxopropyl-coenzyme M-binding site is contributed by R56. FAD is bound at residue S81. C82 provides a ligand contact to 2-oxopropyl-coenzyme M. Residues C82 and C87 are joined by a disulfide bond. A158 serves as a coordination point for FAD. Residues 222–225 (GSKT) and 245–246 (RT) contribute to the NADP(+) site. Position 353 (D353) interacts with FAD. E360 is a binding site for NADP(+). M361 is a binding site for FAD. 2-oxopropyl-coenzyme M is bound at residue R365. F501 serves as a coordination point for FAD.

This sequence belongs to the class-I pyridine nucleotide-disulfide oxidoreductase family. As to quaternary structure, homodimer. Component II of the aliphatic epoxide carboxylation complex together with components I, III and IV. It depends on FAD as a cofactor.

The enzyme catalyses coenzyme M + acetoacetate + NADP(+) = 2-oxopropyl-coenzyme M + CO2 + NADPH. It participates in alkene metabolism; propylene degradation. Its activity is regulated as follows. Inhibited (at 40%) by the coenzyme M analog 2-bromoethanesulfonate (BES). BES is a time-dependent inactivator of dithiothreitol-reduced 2-KPCC, where the redox active cysteines are in the free thiol forms. BES does not inactivate air-oxidized 2-KPCC, where the redox active cysteine pair is in the disulfide form. BES specifically alkylates the interchange thiol that facilitates thioether bond cleavage and enolacetone formation during catalysis. Functionally, involved in aliphatic epoxide carboxylation. Catalyzes the reductive cleavage of the thioether bond of 2-oxopropyl-coenzyme M (2-KPC), and the subsequent carboxylation of the ketopropyl cleavage product, yielding the products acetoacetate and free coenzyme M. This is 2-oxopropyl-CoM reductase, carboxylating from Xanthobacter autotrophicus (strain ATCC BAA-1158 / Py2).